A 492-amino-acid chain; its full sequence is Fibroblast growth factor receptor substrate 3 (492 aa).

Residue Gly-2 is the site of N-myristoyl glycine attachment. The region spanning 13-115 (VPHNHPTKFK…QCNSINVTEE (103 aa)) is the IRS-type PTB domain. Disordered regions lie at residues 122-230 (SSHP…SDQR), 328-414 (LPPV…PPRQ), 426-454 (GTAR…SSDS), and 469-492 (LQRA…DLPL). Residues 371 to 382 (QKPTSTRASARS) are compositionally biased toward polar residues.

As to quaternary structure, binds NGFR, GRB2, PTPN11 and ERK2. Binds FGFR1 and NTRK1. Phosphorylated on tyrosine residues upon stimulation by BFGF or NGFB. Phosphorylated by ULK2 in vitro.

It is found in the membrane. Functionally, adapter protein that links FGF and NGF receptors to downstream signaling pathways. Involved in the activation of MAP kinases. Down-regulates ERK2 signaling by interfering with the phosphorylation and nuclear translocation of ERK2. The sequence is that of Fibroblast growth factor receptor substrate 3 (Frs3) from Mus musculus (Mouse).